Here is a 178-residue protein sequence, read N- to C-terminus: Large ribosomal subunit protein bL35m (178 aa).

It belongs to the bacterial ribosomal protein bL35 family.

Its subcellular location is the mitochondrion. This is Large ribosomal subunit protein bL35m (mRpL35) from Drosophila melanogaster (Fruit fly).